The chain runs to 354 residues: Holliday junction branch migration complex subunit RuvB (354 aa).

The large ATPase domain (RuvB-L) stretch occupies residues Thr-4–Tyr-190. Residues Leu-29, Arg-30, Gly-71, Lys-74, Thr-75, Thr-76, Glu-137–Tyr-139, Arg-180, Tyr-190, and Arg-227 each bind ATP. Thr-75 is a Mg(2+) binding site. Residues Asn-191–Asp-261 are small ATPAse domain (RuvB-S). The tract at residues Ala-264 to Thr-354 is head domain (RuvB-H). Residues Arg-300, Arg-319, and Arg-324 each coordinate DNA.

Belongs to the RuvB family. In terms of assembly, homohexamer. Forms an RuvA(8)-RuvB(12)-Holliday junction (HJ) complex. HJ DNA is sandwiched between 2 RuvA tetramers; dsDNA enters through RuvA and exits via RuvB. An RuvB hexamer assembles on each DNA strand where it exits the tetramer. Each RuvB hexamer is contacted by two RuvA subunits (via domain III) on 2 adjacent RuvB subunits; this complex drives branch migration. In the full resolvosome a probable DNA-RuvA(4)-RuvB(12)-RuvC(2) complex forms which resolves the HJ.

The protein resides in the cytoplasm. The enzyme catalyses ATP + H2O = ADP + phosphate + H(+). Functionally, the RuvA-RuvB-RuvC complex processes Holliday junction (HJ) DNA during genetic recombination and DNA repair, while the RuvA-RuvB complex plays an important role in the rescue of blocked DNA replication forks via replication fork reversal (RFR). RuvA specifically binds to HJ cruciform DNA, conferring on it an open structure. The RuvB hexamer acts as an ATP-dependent pump, pulling dsDNA into and through the RuvAB complex. RuvB forms 2 homohexamers on either side of HJ DNA bound by 1 or 2 RuvA tetramers; 4 subunits per hexamer contact DNA at a time. Coordinated motions by a converter formed by DNA-disengaged RuvB subunits stimulates ATP hydrolysis and nucleotide exchange. Immobilization of the converter enables RuvB to convert the ATP-contained energy into a lever motion, pulling 2 nucleotides of DNA out of the RuvA tetramer per ATP hydrolyzed, thus driving DNA branch migration. The RuvB motors rotate together with the DNA substrate, which together with the progressing nucleotide cycle form the mechanistic basis for DNA recombination by continuous HJ branch migration. Branch migration allows RuvC to scan DNA until it finds its consensus sequence, where it cleaves and resolves cruciform DNA. The sequence is that of Holliday junction branch migration complex subunit RuvB from Paraburkholderia phytofirmans (strain DSM 17436 / LMG 22146 / PsJN) (Burkholderia phytofirmans).